The following is a 368-amino-acid chain: 3-dehydroquinate synthase (368 aa).

NAD(+)-binding positions include 69–74 (DGEAYK), 103–107 (GVIGD), 127–128 (TT), K140, and K149. Zn(2+) is bound by residues E182, H245, and H262.

The protein belongs to the sugar phosphate cyclases superfamily. Dehydroquinate synthase family. Co(2+) is required as a cofactor. Requires Zn(2+) as cofactor. The cofactor is NAD(+).

It is found in the cytoplasm. It carries out the reaction 7-phospho-2-dehydro-3-deoxy-D-arabino-heptonate = 3-dehydroquinate + phosphate. Its pathway is metabolic intermediate biosynthesis; chorismate biosynthesis; chorismate from D-erythrose 4-phosphate and phosphoenolpyruvate: step 2/7. In terms of biological role, catalyzes the conversion of 3-deoxy-D-arabino-heptulosonate 7-phosphate (DAHP) to dehydroquinate (DHQ). This Pseudomonas paraeruginosa (strain DSM 24068 / PA7) (Pseudomonas aeruginosa (strain PA7)) protein is 3-dehydroquinate synthase.